The following is a 407-amino-acid chain: Putative colanic acid biosynthesis glycosyl transferase WcaI (407 aa).

The protein operates within slime biogenesis; slime polysaccharide biosynthesis. This chain is Putative colanic acid biosynthesis glycosyl transferase WcaI (wcaI), found in Escherichia coli (strain K12).